The sequence spans 500 residues: Aspartyl/glutamyl-tRNA(Asn/Gln) amidotransferase subunit B (500 aa).

Belongs to the GatB/GatE family. GatB subfamily. Heterotrimer of A, B and C subunits.

The enzyme catalyses L-glutamyl-tRNA(Gln) + L-glutamine + ATP + H2O = L-glutaminyl-tRNA(Gln) + L-glutamate + ADP + phosphate + H(+). It carries out the reaction L-aspartyl-tRNA(Asn) + L-glutamine + ATP + H2O = L-asparaginyl-tRNA(Asn) + L-glutamate + ADP + phosphate + 2 H(+). In terms of biological role, allows the formation of correctly charged Asn-tRNA(Asn) or Gln-tRNA(Gln) through the transamidation of misacylated Asp-tRNA(Asn) or Glu-tRNA(Gln) in organisms which lack either or both of asparaginyl-tRNA or glutaminyl-tRNA synthetases. The reaction takes place in the presence of glutamine and ATP through an activated phospho-Asp-tRNA(Asn) or phospho-Glu-tRNA(Gln). The protein is Aspartyl/glutamyl-tRNA(Asn/Gln) amidotransferase subunit B of Rhizobium etli (strain CIAT 652).